Here is a 115-residue protein sequence, read N- to C-terminus: Nucleoid-associated protein Npun_F0448 (115 aa).

It belongs to the YbaB/EbfC family. Homodimer.

The protein localises to the cytoplasm. It localises to the nucleoid. Its function is as follows. Binds to DNA and alters its conformation. May be involved in regulation of gene expression, nucleoid organization and DNA protection. The protein is Nucleoid-associated protein Npun_F0448 of Nostoc punctiforme (strain ATCC 29133 / PCC 73102).